Here is a 318-residue protein sequence, read N- to C-terminus: Aspartate carbamoyltransferase catalytic subunit (318 aa).

Residues Arg-58 and Thr-59 each coordinate carbamoyl phosphate. Lys-86 serves as a coordination point for L-aspartate. The carbamoyl phosphate site is built by Arg-108, His-141, and Gln-144. Residues Arg-174 and Arg-226 each contribute to the L-aspartate site. Carbamoyl phosphate contacts are provided by Gly-270 and Pro-271.

Belongs to the aspartate/ornithine carbamoyltransferase superfamily. ATCase family. Heterododecamer (2C3:3R2) of six catalytic PyrB chains organized as two trimers (C3), and six regulatory PyrI chains organized as three dimers (R2).

The catalysed reaction is carbamoyl phosphate + L-aspartate = N-carbamoyl-L-aspartate + phosphate + H(+). It functions in the pathway pyrimidine metabolism; UMP biosynthesis via de novo pathway; (S)-dihydroorotate from bicarbonate: step 2/3. Catalyzes the condensation of carbamoyl phosphate and aspartate to form carbamoyl aspartate and inorganic phosphate, the committed step in the de novo pyrimidine nucleotide biosynthesis pathway. The polypeptide is Aspartate carbamoyltransferase catalytic subunit (Lactobacillus delbrueckii subsp. bulgaricus (strain ATCC 11842 / DSM 20081 / BCRC 10696 / JCM 1002 / NBRC 13953 / NCIMB 11778 / NCTC 12712 / WDCM 00102 / Lb 14)).